The chain runs to 179 residues: 3-hydroxyanthranilate 3,4-dioxygenase (179 aa).

Arg47 is a binding site for O2. Fe cation-binding residues include His51, Glu57, and His96. Residue Glu57 participates in substrate binding. Substrate is bound by residues Arg100 and Glu110. Fe cation is bound by residues Cys125, Cys128, Cys162, and Cys165.

Belongs to the 3-HAO family. Requires Fe(2+) as cofactor.

The catalysed reaction is 3-hydroxyanthranilate + O2 = (2Z,4Z)-2-amino-3-carboxymuconate 6-semialdehyde. It functions in the pathway cofactor biosynthesis; NAD(+) biosynthesis; quinolinate from L-kynurenine: step 3/3. Functionally, catalyzes the oxidative ring opening of 3-hydroxyanthranilate to 2-amino-3-carboxymuconate semialdehyde, which spontaneously cyclizes to quinolinate. This is 3-hydroxyanthranilate 3,4-dioxygenase from Bacillus cereus (strain 03BB102).